The chain runs to 187 residues: Peptidyl-tRNA hydrolase (187 aa).

Tyrosine 16 is a tRNA binding site. Residue histidine 21 is the Proton acceptor of the active site. 3 residues coordinate tRNA: tyrosine 66, asparagine 68, and asparagine 114.

It belongs to the PTH family. In terms of assembly, monomer.

The protein resides in the cytoplasm. The catalysed reaction is an N-acyl-L-alpha-aminoacyl-tRNA + H2O = an N-acyl-L-amino acid + a tRNA + H(+). Hydrolyzes ribosome-free peptidyl-tRNAs (with 1 or more amino acids incorporated), which drop off the ribosome during protein synthesis, or as a result of ribosome stalling. In terms of biological role, catalyzes the release of premature peptidyl moieties from peptidyl-tRNA molecules trapped in stalled 50S ribosomal subunits, and thus maintains levels of free tRNAs and 50S ribosomes. This is Peptidyl-tRNA hydrolase from Malacoplasma penetrans (strain HF-2) (Mycoplasma penetrans).